We begin with the raw amino-acid sequence, 502 residues long: ATP synthase subunit alpha (502 aa).

The segment at 114–139 is disordered; that stretch reads PIDGRGPIETSKTRPIESPAPGVMDR. 169–176 lines the ATP pocket; that stretch reads GDRQTGKT.

It belongs to the ATPase alpha/beta chains family. F-type ATPases have 2 components, CF(1) - the catalytic core - and CF(0) - the membrane proton channel. CF(1) has five subunits: alpha(3), beta(3), gamma(1), delta(1), epsilon(1). CF(0) has three main subunits: a(1), b(2) and c(9-12). The alpha and beta chains form an alternating ring which encloses part of the gamma chain. CF(1) is attached to CF(0) by a central stalk formed by the gamma and epsilon chains, while a peripheral stalk is formed by the delta and b chains.

The protein resides in the cell membrane. It catalyses the reaction ATP + H2O + 4 H(+)(in) = ADP + phosphate + 5 H(+)(out). Functionally, produces ATP from ADP in the presence of a proton gradient across the membrane. The alpha chain is a regulatory subunit. The polypeptide is ATP synthase subunit alpha (Halalkalibacterium halodurans (strain ATCC BAA-125 / DSM 18197 / FERM 7344 / JCM 9153 / C-125) (Bacillus halodurans)).